We begin with the raw amino-acid sequence, 371 residues long: Chaperone protein DnaJ (371 aa).

The J domain maps to 5–69; the sequence is EFYDRLGVSK…QKRAAYDQYG (65 aa). Residues 127–209 form a CR-type zinc finger; it reads GAEKEVSYNR…CHGTGHEKKT (83 aa). Cys-140, Cys-143, Cys-157, Cys-160, Cys-183, Cys-186, Cys-197, and Cys-200 together coordinate Zn(2+). CXXCXGXG motif repeat units follow at residues 140–147, 157–164, 183–190, and 197–204; these read CHTCSGSG, CQKCHGSG, CDVCQGSG, and CPTCHGTG.

This sequence belongs to the DnaJ family. As to quaternary structure, homodimer. It depends on Zn(2+) as a cofactor.

The protein localises to the cytoplasm. Participates actively in the response to hyperosmotic and heat shock by preventing the aggregation of stress-denatured proteins and by disaggregating proteins, also in an autonomous, DnaK-independent fashion. Unfolded proteins bind initially to DnaJ; upon interaction with the DnaJ-bound protein, DnaK hydrolyzes its bound ATP, resulting in the formation of a stable complex. GrpE releases ADP from DnaK; ATP binding to DnaK triggers the release of the substrate protein, thus completing the reaction cycle. Several rounds of ATP-dependent interactions between DnaJ, DnaK and GrpE are required for fully efficient folding. Also involved, together with DnaK and GrpE, in the DNA replication of plasmids through activation of initiation proteins. This is Chaperone protein DnaJ from Streptococcus agalactiae serotype Ia (strain ATCC 27591 / A909 / CDC SS700).